Consider the following 293-residue polypeptide: 33 kDa chaperonin (293 aa).

2 disulfides stabilise this stretch: cysteine 238/cysteine 240 and cysteine 271/cysteine 274.

It belongs to the HSP33 family. Under oxidizing conditions two disulfide bonds are formed involving the reactive cysteines. Under reducing conditions zinc is bound to the reactive cysteines and the protein is inactive.

Its subcellular location is the cytoplasm. Redox regulated molecular chaperone. Protects both thermally unfolding and oxidatively damaged proteins from irreversible aggregation. Plays an important role in the bacterial defense system toward oxidative stress. This Staphylococcus aureus (strain Mu3 / ATCC 700698) protein is 33 kDa chaperonin.